Reading from the N-terminus, the 107-residue chain is Iron-sulfur cluster assembly protein CyaY (107 aa).

Belongs to the frataxin family.

Involved in iron-sulfur (Fe-S) cluster assembly. May act as a regulator of Fe-S biogenesis. This chain is Iron-sulfur cluster assembly protein CyaY, found in Thioalkalivibrio sulfidiphilus (strain HL-EbGR7).